Reading from the N-terminus, the 254-residue chain is Zinc finger FYVE domain-containing protein 21 (254 aa).

An FYVE-type zinc finger spans residues 44 to 104 (DKECPRCMQC…QCAGCAPVSR (61 aa)). Zn(2+) is bound by residues Cys-50, Cys-53, Cys-66, Cys-69, Cys-74, Cys-77, Cys-96, and Cys-99. Residues 107-254 (ADFYDRQLKL…AKLLYESRDQ (148 aa)) are PH-like.

In terms of assembly, interacts with PTK2/FAK1.

The protein resides in the cell junction. It is found in the focal adhesion. The protein localises to the cytoplasmic vesicle. It localises to the endosome. Functionally, plays a role in cell adhesion, and thereby in cell motility which requires repeated formation and disassembly of focal adhesions. Regulates microtubule-induced PTK2/FAK1 dephosphorylation, an event important for focal adhesion disassembly, as well as integrin beta-1/ITGB1 cell surface expression. In Bos taurus (Bovine), this protein is Zinc finger FYVE domain-containing protein 21 (ZFYVE21).